The chain runs to 421 residues: MDKIVINGGNRLTGEVNVEGAKNAVLPVLTASLLASEGHSKLVNVPELSDVETINNVLSTLNANVEYDKDKNAVKVDATKTLNEEAPYEYVSKMRASILVMGPLLARLGHAIVALPGGCAIGTRPIEQHIKGFEALGADIHLENGNIYANAKDGLKGAHIHLDFPSVGATQNIIMAASLASGKSIIENVAKEPEIVDLANYINEMGGKITGAGTDTITIHGVEKLYGVEHAIIPDRIEAGTLLIAGAITRGDIFVRGAIKEHMASLIYKLEEMGVDLEYYEEGIRVTANGDLNPVDVKTLPHPGFPTDMQSQMMALLLTANGHKVITETVFENRFMHVAEFRRMNANISVEGRSAKIEGKSHLQGAQVKATDLRAAAALILAGLVAEGTTQVTELKHLDRGYVNLHGKLKSLGANIERVNR.

Position 22 to 23 (22 to 23) interacts with phosphoenolpyruvate; sequence KN. Arg95 provides a ligand contact to UDP-N-acetyl-alpha-D-glucosamine. The active-site Proton donor is Cys119. Cys119 is modified (2-(S-cysteinyl)pyruvic acid O-phosphothioketal). UDP-N-acetyl-alpha-D-glucosamine contacts are provided by residues 124–128, Asp308, and Val330; that span reads RPIEQ.

The protein belongs to the EPSP synthase family. MurA subfamily.

The protein localises to the cytoplasm. The catalysed reaction is phosphoenolpyruvate + UDP-N-acetyl-alpha-D-glucosamine = UDP-N-acetyl-3-O-(1-carboxyvinyl)-alpha-D-glucosamine + phosphate. The protein operates within cell wall biogenesis; peptidoglycan biosynthesis. Its function is as follows. Cell wall formation. Adds enolpyruvyl to UDP-N-acetylglucosamine. The protein is UDP-N-acetylglucosamine 1-carboxyvinyltransferase 1 of Staphylococcus epidermidis (strain ATCC 35984 / DSM 28319 / BCRC 17069 / CCUG 31568 / BM 3577 / RP62A).